Reading from the N-terminus, the 283-residue chain is NAD(P)H-hydrate epimerase (283 aa).

Residues 1-28 (MLGVRALFGIGLLVTSRGGFVLTHTRAC) constitute a mitochondrion transit peptide. The YjeF N-terminal domain occupies 61-270 (AQQIDEELFS…VLEQKYQLNL (210 aa)). 115–119 (NNGGD) provides a ligand contact to (6S)-NADPHX. K(+)-binding residues include Asn116 and Asp180. (6S)-NADPHX is bound by residues 184-190 (GFSFKGA) and Asp213. Ser216 lines the K(+) pocket.

It belongs to the NnrE/AIBP family. Homodimer. Interacts with apoa1a. Binds to high-density lipoprotein. It depends on K(+) as a cofactor.

The protein resides in the mitochondrion. Its subcellular location is the secreted. It carries out the reaction (6R)-NADHX = (6S)-NADHX. The catalysed reaction is (6R)-NADPHX = (6S)-NADPHX. Its function is as follows. Catalyzes the epimerization of the S- and R-forms of NAD(P)HX, a damaged form of NAD(P)H that is a result of enzymatic or heat-dependent hydration. This is a prerequisite for the S-specific NAD(P)H-hydrate dehydratase to allow the repair of both epimers of NAD(P)HX. This chain is NAD(P)H-hydrate epimerase, found in Danio rerio (Zebrafish).